Here is a 1536-residue protein sequence, read N- to C-terminus: Ferredoxin-dependent glutamate synthase (1536 aa).

Catalysis depends on cysteine 27, which acts as the For GATase activity. Residues 27–427 form the Glutamine amidotransferase type-2 domain; the sequence is CGVGFIANLN…PGQMLCVDLS (401 aa). 1105–1162 lines the FMN pocket; the sequence is LAEVHTTLVENSLREKVILRVDGGLRTGKDIIIAALMGAEEFGFGTVAMIATGCVMAR. 3 residues coordinate [3Fe-4S] cluster: cysteine 1158, cysteine 1164, and cysteine 1169.

This sequence belongs to the glutamate synthase family. Monomer. [3Fe-4S] cluster serves as cofactor. The cofactor is FAD. Requires FMN as cofactor.

It localises to the plastid. Its subcellular location is the chloroplast stroma. It carries out the reaction 2 oxidized [2Fe-2S]-[ferredoxin] + 2 L-glutamate = L-glutamine + 2 reduced [2Fe-2S]-[ferredoxin] + 2-oxoglutarate + 2 H(+). Its pathway is amino-acid biosynthesis; L-glutamate biosynthesis via GLT pathway; L-glutamate from 2-oxoglutarate and L-glutamine (ferredoxin route): step 1/1. The protein operates within energy metabolism; nitrogen metabolism. This chain is Ferredoxin-dependent glutamate synthase (gltB), found in Antithamnion sp. (Red alga).